The chain runs to 338 residues: Ornithine carbamoyltransferase, catabolic (338 aa).

Residues 58-61 (STRT), Gln-85, Arg-109, and 136-139 (HPTQ) contribute to the carbamoyl phosphate site. L-ornithine is bound by residues Asn-168, Asp-232, and 236-237 (SM). Residues 273–274 (CL) and Arg-318 contribute to the carbamoyl phosphate site.

This sequence belongs to the aspartate/ornithine carbamoyltransferase superfamily. OTCase family.

It is found in the cytoplasm. It catalyses the reaction carbamoyl phosphate + L-ornithine = L-citrulline + phosphate + H(+). It functions in the pathway amino-acid degradation; L-arginine degradation via ADI pathway; carbamoyl phosphate from L-arginine: step 2/2. Its function is as follows. Reversibly catalyzes the transfer of the carbamoyl group from carbamoyl phosphate (CP) to the N(epsilon) atom of ornithine (ORN) to produce L-citrulline. The protein is Ornithine carbamoyltransferase, catabolic of Streptococcus pneumoniae serotype 4 (strain ATCC BAA-334 / TIGR4).